A 1403-amino-acid chain; its full sequence is Sushi, nidogen and EGF-like domain-containing protein 1 (1403 aa).

A signal peptide spans 1-24 (MRRGAAWALLLAAALGLGARGVRA). The NIDO domain maps to 103-258 (AFWADVDNRR…GRWAFRIDDA (156 aa)). EGF-like domains follow at residues 268–309 (TTSV…RRCH), 311–347 (DVNECASHPCQNGGTCTHGVNSFSCQCPAGFQGPTCE), and 349–385 (AQSPCDNKVCQNGGQCQAESSSAVCVCQAGYTGATCE). Cystine bridges form between Cys-272–Cys-284, Cys-278–Cys-297, Cys-299–Cys-308, Cys-315–Cys-326, Cys-320–Cys-335, Cys-337–Cys-346, Cys-353–Cys-364, Cys-358–Cys-373, Cys-375–Cys-384, Cys-391–Cys-402, Cys-396–Cys-411, Cys-413–Cys-422, Cys-433–Cys-444, Cys-438–Cys-453, Cys-455–Cys-464, Cys-472–Cys-480, Cys-474–Cys-488, and Cys-490–Cys-499. Asn-292 is a glycosylation site (N-linked (GlcNAc...) asparagine). The region spanning 387–423 (DVDECSSDPCLNGGSCVDLVGNYSCICVEPFEGPQCE) is the EGF-like 4; calcium-binding domain. The N-linked (GlcNAc...) asparagine glycan is linked to Asn-408. EGF-like domains follow at residues 429 to 465 (VPSPCLSNPCLNGGTCVDADQGYVCECPEGFMGLDCR) and 468 to 500 (ILNDCDCRNGGRCLGANTTICQCPPGFFGLLCE). An N-linked (GlcNAc...) asparagine glycan is attached at Asn-484. N-linked (GlcNAc...) asparagine glycosylation is present at Asn-536. EGF-like domains are found at residues 541 to 577 (LPSPCDSDPCFNGGSCDAHEDSYTCECPRGFHGRHCE), 580 to 616 (RPHLCSSGPCRNGGTCKETGDEYRCTCPYRFTGRHCE), 619 to 655 (KPDSCASGPCHNGGTCFHYIGKYKCDCPPGFSGRHCE), and 657 to 693 (APSPCFRSPCMNGGICEDLGTDFSCHCQPGYTGHRCQ). 26 cysteine pairs are disulfide-bonded: Cys-545-Cys-556, Cys-550-Cys-565, Cys-567-Cys-576, Cys-584-Cys-595, Cys-589-Cys-604, Cys-606-Cys-615, Cys-623-Cys-634, Cys-628-Cys-643, Cys-645-Cys-654, Cys-661-Cys-672, Cys-666-Cys-681, Cys-683-Cys-692, Cys-698-Cys-739, Cys-724-Cys-751, Cys-757-Cys-768, Cys-762-Cys-777, Cys-779-Cys-788, Cys-795-Cys-806, Cys-800-Cys-815, Cys-817-Cys-826, Cys-833-Cys-844, Cys-838-Cys-853, Cys-855-Cys-864, Cys-871-Cys-882, Cys-876-Cys-891, and Cys-893-Cys-902. A Sushi domain is found at 696-753 (VDCGQPEEVKHATMRLNGTRMGSVALYTCDPGFSLSVLSHMRVCQPQGVWSQPPQCIE). N-linked (GlcNAc...) asparagine glycosylation occurs at Asn-712. The 37-residue stretch at 753 to 789 (EVDECQSQPCLHKGSCQDLIAGYQCLCSPGYEGVHCE) folds into the EGF-like 11; calcium-binding domain. One can recognise an EGF-like 12; calcium-binding domain in the interval 791–827 (ETDECQAQPCRNGGSCRDLPGAFICQCPEGFVGTHCE). 2 EGF-like domains span residues 829 to 865 (EVDACASSPCQHGGRCEDGGGAYLCVCPEGFFGYNCE) and 867 to 903 (VSDPCFSSPCGGRGYCLASNGSHSCTCKVGYTGKDCT). A glycan (N-linked (GlcNAc...) asparagine) is linked at Asn-886. 3 Fibronectin type-III domains span residues 908-1006 (PPTA…TRPR), 1007-1105 (PIED…TRPL), and 1106-1200 (PPAN…SPRD). N-linked (GlcNAc...) asparagine glycans are attached at residues Asn-977, Asn-1015, Asn-1109, Asn-1139, and Asn-1298. The segment at 1295–1314 (LPKNNSKDTESTPGSCSEDT) is disordered. Residues 1305-1314 (STPGSCSEDT) are compositionally biased toward polar residues. The EGF-like 15 domain occupies 1306–1342 (TPGSCSEDTCQNGGTCVPGANAHSCDCRPGFKGRHCE). Intrachain disulfides connect Cys-1310/Cys-1321, Cys-1315/Cys-1330, and Cys-1332/Cys-1341.

Post-translationally, phosphorylated on serine and threonine residues. In terms of processing, N-glycosylated. In terms of tissue distribution, expressed in liver.

The protein resides in the secreted. The protein localises to the extracellular space. It localises to the extracellular matrix. The chain is Sushi, nidogen and EGF-like domain-containing protein 1 from Rattus norvegicus (Rat).